We begin with the raw amino-acid sequence, 28 residues long: Endoglucanase (28 aa).

Glu20 (nucleophile) is an active-site residue.

The protein belongs to the glycosyl hydrolase 5 (cellulase A) family.

It is found in the cell membrane. The enzyme catalyses Endohydrolysis of (1-&gt;4)-beta-D-glucosidic linkages in cellulose, lichenin and cereal beta-D-glucans.. In Schizophyllum commune (Split gill fungus), this protein is Endoglucanase.